The following is a 237-amino-acid chain: NAD-dependent protein deacetylase (237 aa).

Residues 1–237 (MLTTWLTEAK…LEETNRALQA (237 aa)) form the Deacetylase sirtuin-type domain. NAD(+) is bound by residues alanine 18, threonine 22, phenylalanine 29, arginine 30, glutamine 95, aspartate 98, and histidine 113. Residue phenylalanine 29 coordinates nicotinamide. Aspartate 98 is a nicotinamide binding site. The active-site Proton acceptor is the histidine 113. Zn(2+) contacts are provided by cysteine 121, cysteine 124, cysteine 140, and cysteine 142. NAD(+)-binding residues include serine 180, serine 181, asparagine 205, and isoleucine 224.

The protein belongs to the sirtuin family. Class U subfamily. It depends on Zn(2+) as a cofactor.

Its subcellular location is the cytoplasm. It catalyses the reaction N(6)-acetyl-L-lysyl-[protein] + NAD(+) + H2O = 2''-O-acetyl-ADP-D-ribose + nicotinamide + L-lysyl-[protein]. In terms of biological role, NAD-dependent protein deacetylase which modulates the activities of several enzymes which are inactive in their acetylated form. This Halalkalibacterium halodurans (strain ATCC BAA-125 / DSM 18197 / FERM 7344 / JCM 9153 / C-125) (Bacillus halodurans) protein is NAD-dependent protein deacetylase.